The primary structure comprises 222 residues: Transmembrane protein 114 (222 aa).

A helical membrane pass occupies residues Ala7–Ile27. 2 N-linked (GlcNAc...) asparagine glycosylation sites follow: Asn54 and Asn88. The next 3 membrane-spanning stretches (helical) occupy residues Phe105–Leu125, Leu133–Ile153, and Leu188–Ala208.

It localises to the cell junction. Its subcellular location is the tight junction. The protein localises to the lateral cell membrane. It is found in the apical cell membrane. In Mus musculus (Mouse), this protein is Transmembrane protein 114.